The sequence spans 461 residues: tRNA modification GTPase MnmE (461 aa).

(6S)-5-formyl-5,6,7,8-tetrahydrofolate contacts are provided by Arg23, Glu84, and Lys123. Residues 219–382 (GVQVVIGGRP…LLDHLTDTVA (164 aa)) enclose the TrmE-type G domain. Residues 229-234 (NAGKST), 248-254 (SETPGTT), 273-276 (DTAG), and 337-340 (NKAD) contribute to the GTP site. The Mg(2+) site is built by Ser233 and Thr254. Lys461 contacts (6S)-5-formyl-5,6,7,8-tetrahydrofolate.

It belongs to the TRAFAC class TrmE-Era-EngA-EngB-Septin-like GTPase superfamily. TrmE GTPase family. In terms of assembly, homodimer. Heterotetramer of two MnmE and two MnmG subunits. It depends on K(+) as a cofactor.

Its subcellular location is the cytoplasm. Exhibits a very high intrinsic GTPase hydrolysis rate. Involved in the addition of a carboxymethylaminomethyl (cmnm) group at the wobble position (U34) of certain tRNAs, forming tRNA-cmnm(5)s(2)U34. The sequence is that of tRNA modification GTPase MnmE from Salinibacter ruber (strain DSM 13855 / M31).